The chain runs to 245 residues: 1-(5-phosphoribosyl)-5-[(5-phosphoribosylamino)methylideneamino] imidazole-4-carboxamide isomerase (245 aa).

Asp-7 (proton acceptor) is an active-site residue. Asp-129 acts as the Proton donor in catalysis.

The protein belongs to the HisA/HisF family.

It is found in the cytoplasm. The enzyme catalyses 1-(5-phospho-beta-D-ribosyl)-5-[(5-phospho-beta-D-ribosylamino)methylideneamino]imidazole-4-carboxamide = 5-[(5-phospho-1-deoxy-D-ribulos-1-ylimino)methylamino]-1-(5-phospho-beta-D-ribosyl)imidazole-4-carboxamide. It functions in the pathway amino-acid biosynthesis; L-histidine biosynthesis; L-histidine from 5-phospho-alpha-D-ribose 1-diphosphate: step 4/9. The chain is 1-(5-phosphoribosyl)-5-[(5-phosphoribosylamino)methylideneamino] imidazole-4-carboxamide isomerase from Vibrio campbellii (strain ATCC BAA-1116).